Consider the following 981-residue polypeptide: Polyhomeotic-like protein 3 (981 aa).

Residues 1 to 28 (MDSEPSSGTSVSTTASSTTTTTITTSSS) are compositionally biased toward low complexity. 4 disordered regions span residues 1–33 (MDSE…MQQP), 102–127 (LSSG…TSIL), 224–280 (LSSS…TAVT), and 307–407 (QIPL…SQSP). The span at 224–255 (LSSSQNGSPKSAGQTQSLTICHNKTTVTSSKI) shows a compositional bias: polar residues. A phosphoserine mark is found at S231, S261, S269, and S312. Positions 256 to 266 (SQRDPSPESKK) are enriched in basic and acidic residues. Residues 321-340 (QLLLQQQQQQIQPITLQSPS) are compositionally biased toward low complexity. Over residues 360 to 373 (APSNAQPQHCSPVQ) the composition is skewed to polar residues. Positions 381-395 (VSPNQAQSAQQSVVV) are enriched in low complexity. 2 positions are modified to phosphothreonine: T607 and T612. A Phosphoserine modification is found at S614. Residues 650–690 (KSPSDPTHASAPAPPLLIPAASTRSSSTSLASSTPSLENKP) are disordered. Over residues 667-686 (IPAASTRSSSTSLASSTPSL) the composition is skewed to low complexity. Glycyl lysine isopeptide (Lys-Gly) (interchain with G-Cter in SUMO2) cross-links involve residues K689 and K730. The short motif at 689–718 (KPPQAIVKPQILTHVIEGFVIQEGLEPFPV) is the HD1 element. Phosphoserine occurs at positions 759 and 760. An FCS-type zinc finger spans residues 774-808 (EEMDSELLKCEFCGKMGYPNEFLRSKRFCTMSCAK). Zn(2+) is bound by residues C783, C786, C802, and C806. A Glycyl lysine isopeptide (Lys-Gly) (interchain with G-Cter in SUMO2) cross-link involves residue K808. 2 disordered regions span residues 825-844 (RKPD…GPEG) and 863-888 (EDVA…ERER). In terms of domain architecture, SAM spans 917 to 981 (WTVDDVWAFI…CARINSLKDS (65 aa)).

As to quaternary structure, component of a PRC1-like complex. In terms of tissue distribution, ubiquitous expression.

The protein localises to the nucleus. Component of a Polycomb group (PcG) multiprotein PRC1-like complex, a complex class required to maintain the transcriptionally repressive state of many genes, including Hox genes, throughout development. PcG PRC1 complex acts via chromatin remodeling and modification of histones; it mediates monoubiquitination of histone H2A 'Lys-119', rendering chromatin heritably changed in its expressibility. The polypeptide is Polyhomeotic-like protein 3 (Phc3) (Mus musculus (Mouse)).